Here is a 117-residue protein sequence, read N- to C-terminus: Small ribosomal subunit protein uS17 (117 aa).

The interval 97–117 (AEGLAAAHAGEPETESAATDA) is disordered.

This sequence belongs to the universal ribosomal protein uS17 family. As to quaternary structure, part of the 30S ribosomal subunit.

In terms of biological role, one of the primary rRNA binding proteins, it binds specifically to the 5'-end of 16S ribosomal RNA. The protein is Small ribosomal subunit protein uS17 of Rhodopirellula baltica (strain DSM 10527 / NCIMB 13988 / SH1).